The following is a 217-amino-acid chain: Phosphatidylinositol phosphate synthase (217 aa).

2 helical membrane passes run 28-49 (LTPD…LTLF) and 55-74 (FAGA…DGAM). An a CDP-1,2-diacyl-sn-glycerol-binding site is contributed by 31-34 (DVVT). 2 residues coordinate Mg(2+): D68 and D71. Positions 72, 76, and 82 each coordinate a CDP-1,2-diacyl-sn-glycerol. The Mg(2+) site is built by D89 and D93. Catalysis depends on D93, which acts as the Proton acceptor. 4 consecutive transmembrane segments (helical) span residues 95–112 (ISDG…AFHM), 118–136 (VIAT…YIKA), 156–173 (LIIV…FVPW), and 179–200 (VGMW…HTVW).

It belongs to the CDP-alcohol phosphatidyltransferase class-I family. In terms of assembly, homodimer. Mg(2+) serves as cofactor.

The protein resides in the cell membrane. The catalysed reaction is a CDP-1,2-diacyl-sn-glycerol + 1D-myo-inositol 3-phosphate = a 1,2-diacyl-sn-glycero-3-phospho-(1D-myo-inositol-3-phosphate) + CMP + H(+). It carries out the reaction 1,2-di-(9Z-octadecenoyl)-sn-glycero-3-cytidine-5'-diphosphate + 1D-myo-inositol 3-phosphate = 1,2-di-(9Z-octadecenoyl)-sn-glycero-3-phospho-(1D-myo-inositol-3-phosphate) + CMP + H(+). The protein operates within phospholipid metabolism; phosphatidylinositol phosphate biosynthesis. Its activity is regulated as follows. Competitively inhibited by several inositol 1-phosphate analogs, including the phosphonate analog 1-deoxy-1-phosphonomethyl-myo-inositol (Ino-C-P). Its function is as follows. Catalyzes the conjugation of the 1'-hydroxyl group of D-myo-inositol-3-phosphate (also named L-myo-inositol-1-phosphate) with a lipid tail of cytidine diphosphate diacylglycerol (CDP-DAG), forming phosphatidylinositol phosphate (PIP) and CMP. PIP is a precursor of phosphatidylinositol (PI) which is an essential lipid for mycobacteria required for formation of their cell wall. The chain is Phosphatidylinositol phosphate synthase from Mycobacterium bovis (strain BCG / Pasteur 1173P2).